The primary structure comprises 520 residues: MKIELAIIFIVLAAGAGFLIGNLLRKKLSDSLVSKAEELASRIVEDAKREAETISKEAALQAKDVVYQAKADFEREAKEKHKDLQTLEKRLQQKEENLDKKMNLFDQRDADLTKKEQGILAREQSLNRKEESLDALVAEQRAKLEQISGMSSAEAKKILMDAMESEAKLDAAKRIKAIEEEARETADKKSKEIISLAVQRYAGEYVAEKTVSVVALPSDEMKGRIIGREGRNIRALEAATGIDLIIDDTPEAVILSGFNPVRREVAKIALEKLITDGRIHPGRIEEVVAKAEEEVEQAVKEAGDQAAFDLGVHGIHPEILKLIGRLKYRTSYSQNVYQHSLEVAFLCGIMASELGINVKQAKRAGLLHDLGKAVDHEVEGSHAVIGAELARKYGESPKIVHAIMAHHEDEKPNSILAVLVQAADALSGARPGARREMMETYVKRLEDLERISCSFGGVNNSFAIQAGREIRVMVSSEEVSDERAVLLAKDIAKKIEAEMTYPGQIKVNVIRETRAIEYAR.

The helical transmembrane segment at 3 to 23 (IELAIIFIVLAAGAGFLIGNL) threads the bilayer. Positions 210–273 (TVSVVALPSD…EVAKIALEKL (64 aa)) constitute a KH domain. Residues 336 to 429 (VYQHSLEVAF…VQAADALSGA (94 aa)) form the HD domain.

Belongs to the RNase Y family.

It is found in the cell membrane. Endoribonuclease that initiates mRNA decay. This chain is Ribonuclease Y, found in Geobacter sulfurreducens (strain ATCC 51573 / DSM 12127 / PCA).